Reading from the N-terminus, the 385-residue chain is ATP synthase subunit a-1 (385 aa).

The propeptide occupies 1–133 (MRRIFLFDEN…ALNIVGQAAA (133 aa)). The next 7 membrane-spanning stretches (helical) occupy residues 154–174 (FSFT…LLLI), 220–240 (FFPC…QGMI), 249–269 (HFLI…IVGF), 276–296 (FFSF…LVLL), 316–336 (MMAG…MLCM), 339–359 (IFYF…TGLE), and 362–382 (VAIL…NDAI).

This sequence belongs to the ATPase A chain family. F-type ATPases have 2 components, CF(1) - the catalytic core - and CF(0) - the membrane proton channel. CF(1) has five subunits: alpha(3), beta(3), gamma(1), delta(1), epsilon(1). CF(0) has three main subunits: a, b and c.

The protein resides in the mitochondrion inner membrane. Functionally, mitochondrial membrane ATP synthase (F(1)F(0) ATP synthase or Complex V) produces ATP from ADP in the presence of a proton gradient across the membrane which is generated by electron transport complexes of the respiratory chain. F-type ATPases consist of two structural domains, F(1) - containing the extramembraneous catalytic core and F(0) - containing the membrane proton channel, linked together by a central stalk and a peripheral stalk. During catalysis, ATP synthesis in the catalytic domain of F(1) is coupled via a rotary mechanism of the central stalk subunits to proton translocation. Key component of the proton channel; it may play a direct role in the translocation of protons across the membrane. The polypeptide is ATP synthase subunit a-1 (ATP6-1) (Arabidopsis thaliana (Mouse-ear cress)).